The following is a 244-amino-acid chain: 7-cyano-7-deazaguanine synthase (244 aa).

14–24 (FSGGQDSATCV) is a binding site for ATP. Residues C202, C217, C220, and C223 each coordinate Zn(2+).

It belongs to the QueC family. It depends on Zn(2+) as a cofactor.

It catalyses the reaction 7-carboxy-7-deazaguanine + NH4(+) + ATP = 7-cyano-7-deazaguanine + ADP + phosphate + H2O + H(+). The protein operates within purine metabolism; 7-cyano-7-deazaguanine biosynthesis. Catalyzes the ATP-dependent conversion of 7-carboxy-7-deazaguanine (CDG) to 7-cyano-7-deazaguanine (preQ(0)). The chain is 7-cyano-7-deazaguanine synthase from Burkholderia mallei (strain NCTC 10229).